The chain runs to 51 residues: Proteinase inhibitor PTI (51 aa).

Cystine bridges form between Cys3/Cys40, Cys6/Cys24, Cys7/Cys36, and Cys13/Cys49.

The protein belongs to the protease inhibitor I20 (potato type II proteinase inhibitor) family.

The protein localises to the secreted. The polypeptide is Proteinase inhibitor PTI (Solanum tuberosum (Potato)).